A 242-amino-acid chain; its full sequence is MNAEKTSVAPNVDHAEIAKFEAVASRWWDLEGEFKPLHRINPLRLGYIAERSGGLFGKKVLDVGCGGGILAESMAREGATVTGLDMGAEPLQVAKLHALESGIQVDYVQETVEEHAAKHPQQYDVVTCMEMLEHVPDPQSVVHACARLVKPGGQVFFSTINRNGKAWLMAVVGAEYVMKMVPKGTHDVKKFIKPAELLSWVDQTTLKEQHIIGLHYNPLTNTFKLAPGVDVNYMLHTTAKQD.

S-adenosyl-L-methionine-binding residues include Arg44, Gly64, Asp85, and Met129.

This sequence belongs to the methyltransferase superfamily. UbiG/COQ3 family.

The catalysed reaction is a 3-demethylubiquinol + S-adenosyl-L-methionine = a ubiquinol + S-adenosyl-L-homocysteine + H(+). The enzyme catalyses a 3-(all-trans-polyprenyl)benzene-1,2-diol + S-adenosyl-L-methionine = a 2-methoxy-6-(all-trans-polyprenyl)phenol + S-adenosyl-L-homocysteine + H(+). Its pathway is cofactor biosynthesis; ubiquinone biosynthesis. Functionally, O-methyltransferase that catalyzes the 2 O-methylation steps in the ubiquinone biosynthetic pathway. This Klebsiella pneumoniae (strain 342) protein is Ubiquinone biosynthesis O-methyltransferase.